Consider the following 188-residue polypeptide: Protease-associated domain-containing protein 1 (188 aa).

A signal peptide spans 1–21; the sequence is MSRGAAGWCCLVLWLPTCVAA. Positions 83–163 constitute a PA domain; it reads IQDQIALVER…RSLEQHGLPW (81 aa). N-linked (GlcNAc...) asparagine glycans are attached at residues Asn121 and Asn171.

N-glycosylated; required for efficient secretion. In terms of tissue distribution, expressed in metabolically active tissues such as liver, muscle, adipose, and heart and different brain regions like cortex and hypothalamus, expression is acutely regulated by the nutritional state.

Its subcellular location is the secreted. Plays a role in the modulation of physical activity and adiposity. The sequence is that of Protease-associated domain-containing protein 1 from Mus musculus (Mouse).